Consider the following 334-residue polypeptide: MRFVDEVVIKLQAGKGGNGCVSFRREKYVPRGGPDGGDGGNGGSIYLKADENVNTLIDYRYKREYYAENGRPGEGRNCYGKAGEDLYLVVPVGTSVFDIDTNKKIGEVLQHGQTFKLVSGGKRGIGNTHFKSSTNQAPRKFTLGEEGEYKEVRLELNLLADVALLGLPNAGKSTLIRSVSEATPKVADYPFTTMYPHLGVVKVGVDSFVMADIPGVIEGAAEGAGLGLRFLKHLTRARCVLHVVDICPFSESDPVENYFAVEKELEKYSQELFDKPRFLVINKIDLLADKVEQKCQEFVEQIGYQGNYYTISAAMKKGTDELAKKLNEFLQKQE.

In terms of domain architecture, Obg spans 1 to 159; it reads MRFVDEVVIK…KEVRLELNLL (159 aa). An OBG-type G domain is found at 160–331; it reads ADVALLGLPN…LAKKLNEFLQ (172 aa). Residues 166–173, 191–195, 212–215, 282–285, and 312–314 each bind GTP; these read GLPNAGKS, FTTMY, DIPG, NKID, and SAA. Residues S173 and T193 each coordinate Mg(2+).

It belongs to the TRAFAC class OBG-HflX-like GTPase superfamily. OBG GTPase family. As to quaternary structure, monomer. Requires Mg(2+) as cofactor.

It localises to the cytoplasm. In terms of biological role, an essential GTPase which binds GTP, GDP and possibly (p)ppGpp with moderate affinity, with high nucleotide exchange rates and a fairly low GTP hydrolysis rate. Plays a role in control of the cell cycle, stress response, ribosome biogenesis and in those bacteria that undergo differentiation, in morphogenesis control. The sequence is that of GTPase Obg from Francisella tularensis subsp. mediasiatica (strain FSC147).